We begin with the raw amino-acid sequence, 338 residues long: Glycerol-3-phosphate dehydrogenase [NAD(P)+] (338 aa).

The NADPH site is built by Ser13, Trp14, and Lys108. Sn-glycerol 3-phosphate-binding residues include Lys108, Gly139, and Ser141. Residue Ala143 coordinates NADPH. Lys194, Asp247, Ser257, Arg258, and Asn259 together coordinate sn-glycerol 3-phosphate. Lys194 serves as the catalytic Proton acceptor. Arg258 is a binding site for NADPH. NADPH is bound by residues Val282 and Glu284.

This sequence belongs to the NAD-dependent glycerol-3-phosphate dehydrogenase family.

It localises to the cytoplasm. It catalyses the reaction sn-glycerol 3-phosphate + NAD(+) = dihydroxyacetone phosphate + NADH + H(+). It carries out the reaction sn-glycerol 3-phosphate + NADP(+) = dihydroxyacetone phosphate + NADPH + H(+). It functions in the pathway membrane lipid metabolism; glycerophospholipid metabolism. Functionally, catalyzes the reduction of the glycolytic intermediate dihydroxyacetone phosphate (DHAP) to sn-glycerol 3-phosphate (G3P), the key precursor for phospholipid synthesis. This chain is Glycerol-3-phosphate dehydrogenase [NAD(P)+], found in Streptococcus agalactiae serotype V (strain ATCC BAA-611 / 2603 V/R).